The sequence spans 443 residues: uncharacterized protein (443 aa).

The next 10 helical transmembrane spans lie at 7–29 (VSLY…MLNT), 68–87 (YISS…SIFT), 94–111 (VLSL…YAIF), 121–143 (VTLF…SMFA), 150–164 (IVII…SLTC), 179–201 (IIST…YIFF), 206–225 (LIIK…FAIS), 358–375 (IRFI…FIRN), 382–399 (LFVV…SFFG), and 409–431 (LFGM…IYKI).

The protein localises to the cell membrane. This is an uncharacterized protein from Escherichia coli (strain K12).